Here is a 560-residue protein sequence, read N- to C-terminus: MLLEQQKQLISLIQAAVAQCLPEAQAQVQLERPKVAAHGDIATNVAMQLAKPARRNPRELAQGIVDALMAQPQARELIQDAEIAGPGFINFRLTPAARQAVVQAVASQADAYGRAPRNGEKVLVEFVSANPTGPLHVGHARQAALGDAICRLYDASGWDVTREFYYNDAGNQIDNLAISVQARGRGIAPDAPDYPADGYKGDYIVEIARDFAARKSVQASDGQPVTATGDLDSLDDIRAFAVAYLRREQDLDLQAFGLAFDNYFLESSLYASGRVQETVDTLVAKGHTYEEGGALWLRTTELGTGDDKDRVMRKSEGGYTYFVPDVAYHKVKWERGFHHAVNIQGSDHHGTVARVRAGLQGLAGIPKDFPAYVLHKMVKVMRGGEEVKISKRAGSYVTMRDLIDWVGRDAVRYFLIQRRADTEFVFDIDLALSKSDENPVYYIQYAHARICTMIGNSGASAAEIAQADTALLTAPSEYALLQRLAEFPQVVALAAQELAPHHVAFWLRDCASDFHAWYNAERVLVDEPALKLARLRLAATTRQVLANGLALLGVSAPDRM.

The short motif at 164 to 174 (FYYNDAGNQID) is the 'HIGH' region element.

The protein belongs to the class-I aminoacyl-tRNA synthetase family. Monomer.

The protein resides in the cytoplasm. The enzyme catalyses tRNA(Arg) + L-arginine + ATP = L-arginyl-tRNA(Arg) + AMP + diphosphate. The sequence is that of Arginine--tRNA ligase from Bordetella pertussis (strain Tohama I / ATCC BAA-589 / NCTC 13251).